The following is a 149-amino-acid chain: Transcriptional repressor NrdR (149 aa).

A zinc finger lies at 3-34; the sequence is CPFCGNLETQVVETRVSEDADFIRRRRQCGAC. One can recognise an ATP-cone domain in the interval 49–139; sequence PAIVKKDGRR…VYRSFEDIDE (91 aa).

This sequence belongs to the NrdR family. The cofactor is Zn(2+).

Functionally, negatively regulates transcription of bacterial ribonucleotide reductase nrd genes and operons by binding to NrdR-boxes. This Polaromonas sp. (strain JS666 / ATCC BAA-500) protein is Transcriptional repressor NrdR.